The following is a 631-amino-acid chain: 1-deoxy-D-xylulose-5-phosphate synthase (631 aa).

Thiamine diphosphate is bound by residues H73 and 114 to 116; that span reads GHS. D145 provides a ligand contact to Mg(2+). Thiamine diphosphate is bound by residues 146 to 147, N174, Y285, and E366; that span reads GA. N174 contacts Mg(2+).

It belongs to the transketolase family. DXPS subfamily. Homodimer. Mg(2+) serves as cofactor. Requires thiamine diphosphate as cofactor.

It carries out the reaction D-glyceraldehyde 3-phosphate + pyruvate + H(+) = 1-deoxy-D-xylulose 5-phosphate + CO2. It participates in metabolic intermediate biosynthesis; 1-deoxy-D-xylulose 5-phosphate biosynthesis; 1-deoxy-D-xylulose 5-phosphate from D-glyceraldehyde 3-phosphate and pyruvate: step 1/1. In terms of biological role, catalyzes the acyloin condensation reaction between C atoms 2 and 3 of pyruvate and glyceraldehyde 3-phosphate to yield 1-deoxy-D-xylulose-5-phosphate (DXP). In Desulfitobacterium hafniense (strain Y51), this protein is 1-deoxy-D-xylulose-5-phosphate synthase.